A 422-amino-acid chain; its full sequence is Gamma-glutamyl phosphate reductase (422 aa).

Belongs to the gamma-glutamyl phosphate reductase family.

It localises to the cytoplasm. The enzyme catalyses L-glutamate 5-semialdehyde + phosphate + NADP(+) = L-glutamyl 5-phosphate + NADPH + H(+). The protein operates within amino-acid biosynthesis; L-proline biosynthesis; L-glutamate 5-semialdehyde from L-glutamate: step 2/2. Catalyzes the NADPH-dependent reduction of L-glutamate 5-phosphate into L-glutamate 5-semialdehyde and phosphate. The product spontaneously undergoes cyclization to form 1-pyrroline-5-carboxylate. The chain is Gamma-glutamyl phosphate reductase from Chlorobium phaeovibrioides (strain DSM 265 / 1930) (Prosthecochloris vibrioformis (strain DSM 265)).